Consider the following 154-residue polypeptide: Myoglobin (154 aa).

The Globin domain occupies 2 to 148 (GLSDGEWQLV…FRNDMAAKYK (147 aa)). The residue at position 4 (Ser4) is a Phosphoserine. His65 serves as a coordination point for nitrite. His65 serves as a coordination point for O2. Thr68 carries the post-translational modification Phosphothreonine. Residue His94 coordinates heme b.

Belongs to the globin family. Monomeric.

It is found in the cytoplasm. The protein localises to the sarcoplasm. It carries out the reaction Fe(III)-heme b-[protein] + nitric oxide + H2O = Fe(II)-heme b-[protein] + nitrite + 2 H(+). The enzyme catalyses H2O2 + AH2 = A + 2 H2O. Functionally, monomeric heme protein which primary function is to store oxygen and facilitate its diffusion within muscle tissues. Reversibly binds oxygen through a pentacoordinated heme iron and enables its timely and efficient release as needed during periods of heightened demand. Depending on the oxidative conditions of tissues and cells, and in addition to its ability to bind oxygen, it also has a nitrite reductase activity whereby it regulates the production of bioactive nitric oxide. Under stress conditions, like hypoxia and anoxia, it also protects cells against reactive oxygen species thanks to its pseudoperoxidase activity. The chain is Myoglobin (MB) from Saimiri sciureus (Common squirrel monkey).